We begin with the raw amino-acid sequence, 466 residues long: Probable ribonuclease FAU-1 (466 aa).

An S1 motif domain is found at 90-152 (GAIYAGTVTD…TDGRPVLDTT (63 aa)).

This sequence belongs to the FAU-1 family.

Functionally, probable RNase involved in rRNA stability through maturation and/or degradation of precursor rRNAs. Binds to RNA in loop regions with AU-rich sequences. This Haloarcula marismortui (strain ATCC 43049 / DSM 3752 / JCM 8966 / VKM B-1809) (Halobacterium marismortui) protein is Probable ribonuclease FAU-1.